The following is a 287-amino-acid chain: Bifunctional protein FolD (287 aa).

NADP(+) contacts are provided by residues 164–166 (GSS), Ser-189, and Ile-230.

It belongs to the tetrahydrofolate dehydrogenase/cyclohydrolase family. In terms of assembly, homodimer.

The enzyme catalyses (6R)-5,10-methylene-5,6,7,8-tetrahydrofolate + NADP(+) = (6R)-5,10-methenyltetrahydrofolate + NADPH. It catalyses the reaction (6R)-5,10-methenyltetrahydrofolate + H2O = (6R)-10-formyltetrahydrofolate + H(+). Its pathway is one-carbon metabolism; tetrahydrofolate interconversion. In terms of biological role, catalyzes the oxidation of 5,10-methylenetetrahydrofolate to 5,10-methenyltetrahydrofolate and then the hydrolysis of 5,10-methenyltetrahydrofolate to 10-formyltetrahydrofolate. In Aliarcobacter butzleri (strain RM4018) (Arcobacter butzleri), this protein is Bifunctional protein FolD.